Reading from the N-terminus, the 309-residue chain is Homoserine O-succinyltransferase (309 aa).

Cys142 serves as the catalytic Acyl-thioester intermediate. Substrate-binding residues include Lys163 and Ser192. His235 serves as the catalytic Proton acceptor. Glu237 is a catalytic residue. Position 249 (Arg249) interacts with substrate.

It belongs to the MetA family.

It localises to the cytoplasm. The enzyme catalyses L-homoserine + succinyl-CoA = O-succinyl-L-homoserine + CoA. The protein operates within amino-acid biosynthesis; L-methionine biosynthesis via de novo pathway; O-succinyl-L-homoserine from L-homoserine: step 1/1. Functionally, transfers a succinyl group from succinyl-CoA to L-homoserine, forming succinyl-L-homoserine. In Edwardsiella ictaluri (strain 93-146), this protein is Homoserine O-succinyltransferase.